A 529-amino-acid polypeptide reads, in one-letter code: Peptide chain release factor 3 (529 aa).

The tr-type G domain maps to 11 to 280; the sequence is SKRRTFAIIS…GLVAWAPAPM (270 aa). Residues 20-27, 88-92, and 142-145 each bind GTP; these read SHPDAGKT, DTPGH, and NKLD.

This sequence belongs to the TRAFAC class translation factor GTPase superfamily. Classic translation factor GTPase family. PrfC subfamily.

Its subcellular location is the cytoplasm. Its function is as follows. Increases the formation of ribosomal termination complexes and stimulates activities of RF-1 and RF-2. It binds guanine nucleotides and has strong preference for UGA stop codons. It may interact directly with the ribosome. The stimulation of RF-1 and RF-2 is significantly reduced by GTP and GDP, but not by GMP. In Pectobacterium carotovorum subsp. carotovorum (strain PC1), this protein is Peptide chain release factor 3.